A 382-amino-acid chain; its full sequence is Cell division protein DivIB (382 aa).

Over 1-103 (MAKDKEKQSD…SATQIAFQKS (103 aa)) the chain is Cytoplasmic. 2 stretches are compositionally biased toward basic and acidic residues: residues 36–49 (EKKL…DKKA) and 60–70 (VELKTDEKTDS). The disordered stretch occupies residues 36 to 92 (EKKLKEKLLSDKKAQQQAQNASEAVELKTDEKTDSQEIESETTSKPKKTKKVRQPKE). A helical transmembrane segment spans residues 104-124 (LPVLLGALLLMAVSIFMITPY). The region spanning 125 to 196 (SKKKEFSVRG…NHFLFNVIEF (72 aa)) is the POTRA domain. The Extracellular segment spans residues 125 to 382 (SKKKEFSVRG…PETVLEQAHG (258 aa)). Residues 322 to 382 (QEIENQPEVP…PETVLEQAHG (61 aa)) are disordered. The segment covering 338-352 (AADKEGDKPGEHQEQ) has biased composition (basic and acidic residues).

The protein belongs to the FtsQ/DivIB family. DivIB subfamily.

It is found in the cell membrane. In terms of biological role, cell division protein that may be involved in stabilizing or promoting the assembly of the division complex. In Streptococcus pyogenes serotype M2 (strain MGAS10270), this protein is Cell division protein DivIB.